The chain runs to 162 residues: Caveolin-2 (162 aa).

Residues 1-86 (MGLETEKADV…FEISKYVMYK (86 aa)) are Cytoplasmic-facing. A Phosphotyrosine; by SRC modification is found at Y19. Phosphoserine is present on residues S20 and S23. Position 27 is a phosphotyrosine; by SRC (Y27). S36 carries the phosphoserine modification. The segment at residues 87–107 (FLTVFLAIPLAFIAGILFATL) is an intramembrane region (helical). The Cytoplasmic segment spans residues 108 to 162 (SCLHIWILMPFVKTCLMVLPSVQTIWKSVTDVFIAPLCTSVGRSFSSVSLQLSQD).

The protein belongs to the caveolin family. Monomer or homodimer. Interacts with CAV1; the interaction forms a stable heterooligomeric complex that is required for targeting to lipid rafts and for caveolae formation. Tyrosine phosphorylated forms do not form heterooligomers with the Tyr-19-phosphorylated form existing as a monomer or dimer, and the Tyr-27-form as a monomer only. Interacts (tyrosine phosphorylated form) with the SH2 domain-containing proteins, RASA1, NCK1 and SRC. Interacts (tyrosine phosphorylated form) with INSR, the interaction (Tyr-27-phosphorylated form) is increased on insulin stimulation. Interacts (Tyr-19 phosphorylated form) with MAPK1 (phosphorylated form); the interaction, promoted by insulin, leads to nuclear location and MAPK1 activation. Interacts with STAT3; the interaction is increased on insulin-induced tyrosine phosphorylation leading to STAT activation. Post-translationally, phosphorylated on serine and tyrosine residues. CAV1 promotes phosphorylation on Ser-23 which then targets the complex to the plasma membrane, lipid rafts and caveolae. Phosphorylation on Ser-36 appears to modulate mitosis in endothelial cells. Phosphorylation on both Tyr-19 and Tyr-27 is required for insulin-induced 'Ser-727' phosphorylation of STAT3 and its activation. Phosphorylation on Tyr-19 is required for insulin-induced phosphorylation of MAPK1 and DNA binding of STAT3. Tyrosine phosphorylation is induced by both EGF and insulin (By. similarity).

Its subcellular location is the nucleus. It is found in the cytoplasm. The protein resides in the golgi apparatus membrane. It localises to the cell membrane. The protein localises to the membrane. Its subcellular location is the caveola. Functionally, may act as a scaffolding protein within caveolar membranes. Interacts directly with G-protein alpha subunits and can functionally regulate their activity. Acts as an accessory protein in conjunction with CAV1 in targeting to lipid rafts and driving caveolae formation. The Ser-36 phosphorylated form has a role in modulating mitosis in endothelial cells. Positive regulator of cellular mitogenesis of the MAPK signaling pathway. Required for the insulin-stimulated nuclear translocation and activation of MAPK1 and STAT3, and the subsequent regulation of cell cycle progression. The polypeptide is Caveolin-2 (CAV2) (Chlorocebus aethiops (Green monkey)).